A 151-amino-acid polypeptide reads, in one-letter code: UPF0178 protein PMI1258 (151 aa).

Belongs to the UPF0178 family.

The protein is UPF0178 protein PMI1258 of Proteus mirabilis (strain HI4320).